We begin with the raw amino-acid sequence, 403 residues long: Phosphoglycerate kinase (403 aa).

Substrate-binding positions include 22 to 24 (DLN), R37, 60 to 63 (HLGN), R119, and R152. Residues K202, E325, and 355–358 (GGDT) each bind ATP.

The protein belongs to the phosphoglycerate kinase family. As to quaternary structure, monomer.

It is found in the cytoplasm. The enzyme catalyses (2R)-3-phosphoglycerate + ATP = (2R)-3-phospho-glyceroyl phosphate + ADP. The protein operates within carbohydrate degradation; glycolysis; pyruvate from D-glyceraldehyde 3-phosphate: step 2/5. The sequence is that of Phosphoglycerate kinase from Orientia tsutsugamushi (strain Boryong) (Rickettsia tsutsugamushi).